The chain runs to 289 residues: 4-diphosphocytidyl-2-C-methyl-D-erythritol kinase (289 aa).

Residue K11 is part of the active site. 95 to 105 is an ATP binding site; the sequence is PMGGGIGGGSS. D137 is an active-site residue.

It belongs to the GHMP kinase family. IspE subfamily.

The enzyme catalyses 4-CDP-2-C-methyl-D-erythritol + ATP = 4-CDP-2-C-methyl-D-erythritol 2-phosphate + ADP + H(+). The protein operates within isoprenoid biosynthesis; isopentenyl diphosphate biosynthesis via DXP pathway; isopentenyl diphosphate from 1-deoxy-D-xylulose 5-phosphate: step 3/6. In terms of biological role, catalyzes the phosphorylation of the position 2 hydroxy group of 4-diphosphocytidyl-2C-methyl-D-erythritol. The protein is 4-diphosphocytidyl-2-C-methyl-D-erythritol kinase of Aeromonas hydrophila subsp. hydrophila (strain ATCC 7966 / DSM 30187 / BCRC 13018 / CCUG 14551 / JCM 1027 / KCTC 2358 / NCIMB 9240 / NCTC 8049).